The sequence spans 93 residues: Co-chaperonin GroES (93 aa).

This sequence belongs to the GroES chaperonin family. As to quaternary structure, heptamer of 7 subunits arranged in a ring. Interacts with the chaperonin GroEL.

It localises to the cytoplasm. Together with the chaperonin GroEL, plays an essential role in assisting protein folding. The GroEL-GroES system forms a nano-cage that allows encapsulation of the non-native substrate proteins and provides a physical environment optimized to promote and accelerate protein folding. GroES binds to the apical surface of the GroEL ring, thereby capping the opening of the GroEL channel. The sequence is that of Co-chaperonin GroES from Streptococcus gordonii.